Here is a 542-residue protein sequence, read N- to C-terminus: Cryptochrome-1 (542 aa).

A Photolyase/cryptochrome alpha/beta domain is found at 5–140 (GANVIWFRHG…DFVEKVSHTL (136 aa)). FAD-binding positions include R237, S265, S267, Q311, H378, 410–412 (DAD), C416, and N419.

It belongs to the DNA photolyase class-1 family. Interacts with tim and per; promoted by light conditions. Interaction with tim irreversibly commits tim to proteasomal degradation. Interacts with l(1)G0136/CG8198. FAD is required as a cofactor. As to expression, expressed at higher levels in the head than in body and it is more expressed in antennae than in legs, wings and mouth appendages. Prominent expression is seen in cells of the lateral brain, which are close to or coincident with the clock neurons. Abundance oscillates in a circadian manner.

Its subcellular location is the cytoplasm. It localises to the perinuclear region. The protein resides in the nucleus. Its function is as follows. Blue light-dependent regulator that is the input of the circadian feedback loop. Has no photolyase activity for cyclobutane pyrimidine dimers or 6-4 photoproducts. Regulation of expression by light suggests a role in photoreception for locomotor activity rhythms. Functions, together with per, as a transcriptional repressor required for the oscillation of peripheral circadian clocks and for the correct specification of clock cells. Genes directly activated by the transcription factors Clock (Clk) and cycle (cyc) are repressed by cry. Necessary for light-dependent magnetosensitivity, an intact circadian system is not required for the magnetoreception mechanism to operate. Required for both the naive and trained responses to magnetic field, consistent with the notion that cry is in the input pathway of magnetic sensing. This chain is Cryptochrome-1, found in Drosophila melanogaster (Fruit fly).